A 290-amino-acid polypeptide reads, in one-letter code: 1D-myo-inositol 2-acetamido-2-deoxy-alpha-D-glucopyranoside deacetylase (290 aa).

Positions 17, 20, and 150 each coordinate Zn(2+).

Belongs to the MshB deacetylase family. Requires Zn(2+) as cofactor.

The enzyme catalyses 1D-myo-inositol 2-acetamido-2-deoxy-alpha-D-glucopyranoside + H2O = 1D-myo-inositol 2-amino-2-deoxy-alpha-D-glucopyranoside + acetate. Functionally, catalyzes the deacetylation of 1D-myo-inositol 2-acetamido-2-deoxy-alpha-D-glucopyranoside (GlcNAc-Ins) in the mycothiol biosynthesis pathway. This is 1D-myo-inositol 2-acetamido-2-deoxy-alpha-D-glucopyranoside deacetylase from Corynebacterium glutamicum (strain R).